A 619-amino-acid chain; its full sequence is MKRKLDANDVPSTEVAEEKETKDADNTDFESLNLDPRLRQALIREQFTKPTPVQSKAIPLALEGKDILARAKTGSGKTAAYVLPILQTILQKKAADPSLKATTGLVLVPTRELAEQVQSVIIKFSAFCGKDVRSVNLTQKVSDAVQRTMLADYPDLIVSTPARVIANLGTSALSLEHLTHLVIDEADLVLSYGYDEDINALAKAIPRGVQTFLMSATLTSEVDTLKGLFCRSPVILKLEDKEDEGAGISQFVVRCAEDEKFLLTYVIFKLQLIKGKVIIFVGDIDRCYRLKLFLEQFGIKSCVLNSELPINSRIHVVQEFNKGVYDIIIAADEQEVMGSRTSSKKSKEATDGDDEAKDKMGSSEDEDNEPEQSGKSARPEKRRKTSGKAKDYGISRGIDFQNVACVLNFDLPTTSKSYTHRIGRTGRAGKAGMALSFVVPADEFGKHKPTSFPTAKHDESVLAKIVKKQAKLGHEVKPYHFEMKQVDAFRYRMTDALRAVTRLAIQEARAREIRQELVKSEKLKRHFEENPEELKQLRHDGELRAARIQPHLKHIPDYLMPSKGRKGISSEDVGFVGFRKSGDNRIRKAREKNRGKGKGRKPSGVRKVDPLKTFNRGRK.

Residues 1–30 (MKRKLDANDVPSTEVAEEKETKDADNTDFE) form a disordered region. Basic and acidic residues predominate over residues 16–25 (AEEKETKDAD). Positions 27-55 (TDFESLNLDPRLRQALIREQFTKPTPVQS) match the Q motif motif. Residues 58–236 (IPLALEGKDI…GLFCRSPVIL (179 aa)) enclose the Helicase ATP-binding domain. 71–78 (AKTGSGKT) is a binding site for ATP. The short motif at 184–187 (DEAD) is the DEAD box element. A Helicase C-terminal domain is found at 247–484 (GISQFVVRCA…EVKPYHFEMK (238 aa)). Disordered stretches follow at residues 339–390 (SRTS…GKAK) and 582–619 (GDNR…RGRK). The span at 345–362 (KSKEATDGDDEAKDKMGS) shows a compositional bias: basic and acidic residues. Basic residues predominate over residues 587 to 604 (RKAREKNRGKGKGRKPSG).

It belongs to the DEAD box helicase family. DDX56/DBP9 subfamily.

Its subcellular location is the nucleus. It localises to the nucleolus. It catalyses the reaction ATP + H2O = ADP + phosphate + H(+). Its function is as follows. ATP-binding RNA helicase involved in the biogenesis of 60S ribosomal subunits and is required for the normal formation of 25S and 5.8S rRNAs. The polypeptide is ATP-dependent RNA helicase dbp9 (dbp9) (Neosartorya fischeri (strain ATCC 1020 / DSM 3700 / CBS 544.65 / FGSC A1164 / JCM 1740 / NRRL 181 / WB 181) (Aspergillus fischerianus)).